A 176-amino-acid chain; its full sequence is ATP-dependent protease subunit HslV (176 aa).

The active site involves Thr-5. Ala-161, Cys-164, and Thr-167 together coordinate Na(+).

This sequence belongs to the peptidase T1B family. HslV subfamily. As to quaternary structure, a double ring-shaped homohexamer of HslV is capped on each side by a ring-shaped HslU homohexamer. The assembly of the HslU/HslV complex is dependent on binding of ATP.

The protein resides in the cytoplasm. The catalysed reaction is ATP-dependent cleavage of peptide bonds with broad specificity.. Its activity is regulated as follows. Allosterically activated by HslU binding. Its function is as follows. Protease subunit of a proteasome-like degradation complex believed to be a general protein degrading machinery. This is ATP-dependent protease subunit HslV from Desulforamulus reducens (strain ATCC BAA-1160 / DSM 100696 / MI-1) (Desulfotomaculum reducens).